The primary structure comprises 458 residues: RuvB-like protein 1 (458 aa).

73 to 80 is a binding site for ATP; the sequence is GPPGTGKT.

The protein belongs to the RuvB family. In terms of assembly, interacts with FRI, and with FLX and FES1, two component of the transcription activator complex FRI-C. Interacts with the disease resistance genes RPM1 and RPP5.

The protein resides in the nucleus. The enzyme catalyses ATP + H2O = ADP + phosphate + H(+). Proposed core component of the chromatin remodeling INO80 complex which is involved in transcriptional regulation, DNA replication and probably DNA repair. Component of the NuA4 histone acetyltransferase complex which is involved in transcriptional activation of select genes principally by acetylation of nucleosomal histones H4 and H2A. Has single-stranded DNA-stimulated ATPase and ATP-dependent DNA helicase (3' to 5') activity suggesting a role in nuclear processes such as recombination and transcription. This chain is RuvB-like protein 1 (RIN1), found in Arabidopsis thaliana (Mouse-ear cress).